Consider the following 353-residue polypeptide: S-adenosylmethionine:tRNA ribosyltransferase-isomerase (353 aa).

The protein belongs to the QueA family. As to quaternary structure, monomer.

The protein localises to the cytoplasm. It catalyses the reaction 7-aminomethyl-7-carbaguanosine(34) in tRNA + S-adenosyl-L-methionine = epoxyqueuosine(34) in tRNA + adenine + L-methionine + 2 H(+). Its pathway is tRNA modification; tRNA-queuosine biosynthesis. Functionally, transfers and isomerizes the ribose moiety from AdoMet to the 7-aminomethyl group of 7-deazaguanine (preQ1-tRNA) to give epoxyqueuosine (oQ-tRNA). The protein is S-adenosylmethionine:tRNA ribosyltransferase-isomerase of Blochmanniella floridana.